The primary structure comprises 380 residues: Alcohol dehydrogenase 2 (380 aa).

Zn(2+)-binding residues include C48, T50, H70, C100, C103, C106, C114, and C178. T50 and H70 together coordinate an alcohol. T50 is a binding site for NAD(+). NAD(+) is bound by residues 203 to 208, D227, R232, T273, V296, 296 to 298, F323, and R373; these read GLGAVG and VGV.

This sequence belongs to the zinc-containing alcohol dehydrogenase family. Homodimer. Homotetramer. It depends on Zn(2+) as a cofactor.

It localises to the cytoplasm. The enzyme catalyses a primary alcohol + NAD(+) = an aldehyde + NADH + H(+). It carries out the reaction a secondary alcohol + NAD(+) = a ketone + NADH + H(+). This chain is Alcohol dehydrogenase 2 (ADH2), found in Solanum tuberosum (Potato).